Reading from the N-terminus, the 64-residue chain is UPF0434 protein Bmul_0750/BMULJ_02510 (64 aa).

The protein belongs to the UPF0434 family.

The sequence is that of UPF0434 protein Bmul_0750/BMULJ_02510 from Burkholderia multivorans (strain ATCC 17616 / 249).